Here is a 317-residue protein sequence, read N- to C-terminus: Lipoyl synthase (317 aa).

The interval 1–21 (MVTVIDTLARPRHPEKANRPE) is disordered. The segment covering 12–21 (RHPEKANRPE) has biased composition (basic and acidic residues). Residues Cys57, Cys62, Cys68, Cys83, Cys87, Cys90, and Ser296 each contribute to the [4Fe-4S] cluster site. The Radical SAM core domain maps to 69–285 (WEKKHATFMI…ETVAYAKGFL (217 aa)).

The protein belongs to the radical SAM superfamily. Lipoyl synthase family. The cofactor is [4Fe-4S] cluster.

Its subcellular location is the cytoplasm. It catalyses the reaction [[Fe-S] cluster scaffold protein carrying a second [4Fe-4S](2+) cluster] + N(6)-octanoyl-L-lysyl-[protein] + 2 oxidized [2Fe-2S]-[ferredoxin] + 2 S-adenosyl-L-methionine + 4 H(+) = [[Fe-S] cluster scaffold protein] + N(6)-[(R)-dihydrolipoyl]-L-lysyl-[protein] + 4 Fe(3+) + 2 hydrogen sulfide + 2 5'-deoxyadenosine + 2 L-methionine + 2 reduced [2Fe-2S]-[ferredoxin]. Its pathway is protein modification; protein lipoylation via endogenous pathway; protein N(6)-(lipoyl)lysine from octanoyl-[acyl-carrier-protein]: step 2/2. In terms of biological role, catalyzes the radical-mediated insertion of two sulfur atoms into the C-6 and C-8 positions of the octanoyl moiety bound to the lipoyl domains of lipoate-dependent enzymes, thereby converting the octanoylated domains into lipoylated derivatives. This Xanthobacter autotrophicus (strain ATCC BAA-1158 / Py2) protein is Lipoyl synthase.